The primary structure comprises 319 residues: Aspartate carbamoyltransferase catalytic subunit (319 aa).

2 residues coordinate carbamoyl phosphate: arginine 65 and threonine 66. Lysine 93 provides a ligand contact to L-aspartate. 3 residues coordinate carbamoyl phosphate: arginine 115, histidine 149, and glutamine 152. 2 residues coordinate L-aspartate: arginine 182 and arginine 237. The carbamoyl phosphate site is built by glycine 278 and proline 279.

The protein belongs to the aspartate/ornithine carbamoyltransferase superfamily. ATCase family. As to quaternary structure, heterododecamer (2C3:3R2) of six catalytic PyrB chains organized as two trimers (C3), and six regulatory PyrI chains organized as three dimers (R2).

It carries out the reaction carbamoyl phosphate + L-aspartate = N-carbamoyl-L-aspartate + phosphate + H(+). It participates in pyrimidine metabolism; UMP biosynthesis via de novo pathway; (S)-dihydroorotate from bicarbonate: step 2/3. Its function is as follows. Catalyzes the condensation of carbamoyl phosphate and aspartate to form carbamoyl aspartate and inorganic phosphate, the committed step in the de novo pyrimidine nucleotide biosynthesis pathway. The protein is Aspartate carbamoyltransferase catalytic subunit of Dechloromonas aromatica (strain RCB).